The primary structure comprises 1142 residues: Desmoglein-2.1 (1142 aa).

Positions 1–18 (MARRISPVVAFLLCFGLS) are cleaved as a signal peptide. Residues 19–38 (HFFEAEARLQHSVALHRQKR) constitute a propeptide that is removed on maturation. Over 39 to 643 (EWIVPPQILE…AKKGSRLGPA (605 aa)) the chain is Extracellular. Cadherin domains lie at 64–148 (SDKE…APVF), 156–258 (VDEL…VPTL), 259–416 (GGPY…GPKF), and 417–527 (FPGT…CPTL). N-linked (GlcNAc...) asparagine glycosylation is present at Asn115. Positions 369–389 (SGAAGGAGAMGGASGSGGGTG) are disordered. Asn490 and Asn576 each carry an N-linked (GlcNAc...) asparagine glycan. The helical transmembrane segment at 644–664 (GIGLLLLALLALLLIPLLLLL) threads the bilayer. Residues 665-1142 (CTCGMTGAFT…RKVVTTQSVK (478 aa)) are Cytoplasmic-facing. Desmoglein repeat repeat units lie at residues 948-974 (VEQQ…NSGP), 975-998 (VAEG…ERMV), 999-1039 (LVFR…VLQG), and 1040-1071 (TIQR…NGIS).

The protein resides in the cell junction. The protein localises to the desmosome. It is found in the cell membrane. It localises to the cytoplasm. Functionally, a component of desmosome cell-cell junctions which are required for positive regulation of cellular adhesion. Involved in the interaction of plaque proteins and intermediate filaments mediating cell-cell adhesion. Required for embryogenesis, specifically for progression of epiboly and normal convergence-extension movements during gastrulation. The sequence is that of Desmoglein-2.1 from Danio rerio (Zebrafish).